Consider the following 240-residue polypeptide: NADH-quinone oxidoreductase subunit I 2 (240 aa).

2 consecutive 4Fe-4S ferredoxin-type domains span residues 57-86 (TDLR…IEWH) and 97-126 (DRFA…MGYD). Residues C66, C69, C72, C76, C106, C109, C112, and C116 each contribute to the [4Fe-4S] cluster site. Residues 185-240 (IHGYLGRPPLPKGYEPELKPQFRKPAEEAAEAQQAEAAGQPAAEPGKTNGEEAGQP) are disordered. Residues 198–211 (YEPELKPQFRKPAE) are compositionally biased toward basic and acidic residues. Over residues 215-230 (EAQQAEAAGQPAAEPG) the composition is skewed to low complexity.

It belongs to the complex I 23 kDa subunit family. As to quaternary structure, NDH-1 is composed of 14 different subunits. Subunits NuoA, H, J, K, L, M, N constitute the membrane sector of the complex. It depends on [4Fe-4S] cluster as a cofactor.

It is found in the cell membrane. The enzyme catalyses a quinone + NADH + 5 H(+)(in) = a quinol + NAD(+) + 4 H(+)(out). Its function is as follows. NDH-1 shuttles electrons from NADH, via FMN and iron-sulfur (Fe-S) centers, to quinones in the respiratory chain. The immediate electron acceptor for the enzyme in this species is believed to be ubiquinone. Couples the redox reaction to proton translocation (for every two electrons transferred, four hydrogen ions are translocated across the cytoplasmic membrane), and thus conserves the redox energy in a proton gradient. In Symbiobacterium thermophilum (strain DSM 24528 / JCM 14929 / IAM 14863 / T), this protein is NADH-quinone oxidoreductase subunit I 2.